The sequence spans 376 residues: Chaperone protein DnaJ (376 aa).

The J domain occupies 4 to 69; the sequence is DFYETLGVQK…QKRAAYDRFG (66 aa). The CR-type zinc finger occupies 133 to 211; the sequence is GKTAQIRVPA…CAGQGRVTEE (79 aa). Residues Cys146, Cys149, Cys163, Cys166, Cys185, Cys188, Cys199, and Cys202 each coordinate Zn(2+). CXXCXGXG motif repeat units lie at residues 146–153, 163–170, 185–192, and 199–206; these read CTECSGSG, CSMCHGHG, CPQCQGRG, and CPKCAGQG.

This sequence belongs to the DnaJ family. As to quaternary structure, homodimer. Zn(2+) is required as a cofactor.

It localises to the cytoplasm. Its function is as follows. Participates actively in the response to hyperosmotic and heat shock by preventing the aggregation of stress-denatured proteins and by disaggregating proteins, also in an autonomous, DnaK-independent fashion. Unfolded proteins bind initially to DnaJ; upon interaction with the DnaJ-bound protein, DnaK hydrolyzes its bound ATP, resulting in the formation of a stable complex. GrpE releases ADP from DnaK; ATP binding to DnaK triggers the release of the substrate protein, thus completing the reaction cycle. Several rounds of ATP-dependent interactions between DnaJ, DnaK and GrpE are required for fully efficient folding. Also involved, together with DnaK and GrpE, in the DNA replication of plasmids through activation of initiation proteins. The protein is Chaperone protein DnaJ of Mesorhizobium japonicum (strain LMG 29417 / CECT 9101 / MAFF 303099) (Mesorhizobium loti (strain MAFF 303099)).